We begin with the raw amino-acid sequence, 338 residues long: Tetraacyldisaccharide 4'-kinase (338 aa).

65–72 provides a ligand contact to ATP; that stretch reads TVGGTGKT.

The protein belongs to the LpxK family.

The catalysed reaction is a lipid A disaccharide + ATP = a lipid IVA + ADP + H(+). Its pathway is glycolipid biosynthesis; lipid IV(A) biosynthesis; lipid IV(A) from (3R)-3-hydroxytetradecanoyl-[acyl-carrier-protein] and UDP-N-acetyl-alpha-D-glucosamine: step 6/6. Functionally, transfers the gamma-phosphate of ATP to the 4'-position of a tetraacyldisaccharide 1-phosphate intermediate (termed DS-1-P) to form tetraacyldisaccharide 1,4'-bis-phosphate (lipid IVA). In Paraburkholderia xenovorans (strain LB400), this protein is Tetraacyldisaccharide 4'-kinase.